The sequence spans 25 residues: Brevinin-2R (25 aa).

A disulfide bridge connects residues Cys-19 and Cys-25.

Belongs to the frog skin active peptide (FSAP) family. Brevinin subfamily. As to expression, expressed by the skin glands.

Its subcellular location is the secreted. Functionally, cytotoxic to cancer cells, acts via the activation of the lysosomal-mitochondrial death pathway and autophagy-like cell death. Does not show significant hemolytic activity. This chain is Brevinin-2R, found in Pelophylax ridibundus (Marsh frog).